The chain runs to 505 residues: Protein disulfide-isomerase A3 (505 aa).

The N-terminal stretch at 1–24 is a signal peptide; sequence MRLRRLALFPGVALLLAAARLAAA. Residues 25-133 form the Thioredoxin 1 domain; sequence SDVLELTDDN…IVSHLKKQAG (109 aa). Residues Cys-57 and Cys-60 each act as nucleophile in the active site. Residues Cys-57 and Cys-60 are joined by a disulfide bond. Lys-61 carries the post-translational modification N6-methyllysine. Cysteines 85 and 92 form a disulfide. Residue Lys-129 is modified to N6-succinyllysine. Lys-152 is modified (N6-acetyllysine). Lys-218 is subject to N6-succinyllysine. Residue Lys-252 is modified to N6-acetyllysine. The residue at position 319 (Thr-319) is a Phosphothreonine. The 143-residue stretch at 343–485 folds into the Thioredoxin 2 domain; it reads SRDGKALERF…FISYLQREAT (143 aa). Lys-362 carries the N6-acetyllysine modification. Active-site nucleophile residues include Cys-406 and Cys-409. Residues Cys-406 and Cys-409 are joined by a disulfide bond. The interval 484–505 is disordered; it reads ATNPPVIQEEKPKKKKKAQEDL. The span at 491–505 shows a compositional bias: basic and acidic residues; sequence QEEKPKKKKKAQEDL. At Lys-494 the chain carries N6-acetyllysine. Positions 502 to 505 match the Prevents secretion from ER motif; the sequence is QEDL.

Belongs to the protein disulfide isomerase family. In terms of assembly, part of the major histocompatibility complex class I (MHC I) peptide loading complex composed of TAP1, TAP2, B2M, MHC heavy chain, TAPBP, PDIA3, and CALR. Interacts with ERP27 and CANX. Interacts with SERPINA2 and with SERPINA1. Interacts with ATP2A2. In terms of processing, within the major histocompatibility complex class I (MHC I) peptide loading complex forms reversible disulfide-linked heterodimers with TAPBP as part of its protein folding chaperone activity. This is essential to assist the dynamic assembly of the MHC I complex with high affinity antigens in the endoplasmic reticulum. Post-translationally, phosphorylated.

The protein resides in the endoplasmic reticulum. It is found in the endoplasmic reticulum lumen. The protein localises to the melanosome. The enzyme catalyses Catalyzes the rearrangement of -S-S- bonds in proteins.. In terms of biological role, protein disulfide isomerase that catalyzes the formation, isomerization, and reduction or oxidation of disulfide bonds in client proteins and functions as a protein folding chaperone. Core component of the major histocompatibility complex class I (MHC I) peptide loading complex where it functions as an essential folding chaperone for TAPBP. Through TAPBP, assists the dynamic assembly of the MHC I complex with high affinity antigens in the endoplasmic reticulum. Therefore, plays a crucial role in the presentation of antigens to cytotoxic T cells in adaptive immunity. This chain is Protein disulfide-isomerase A3 (PDIA3), found in Chlorocebus aethiops (Green monkey).